The chain runs to 197 residues: Molybdenum cofactor guanylyltransferase (197 aa).

Residues 10-12 (LAG), lysine 23, aspartate 69, and aspartate 99 each bind GTP. Position 99 (aspartate 99) interacts with Mg(2+).

Belongs to the MobA family. As to quaternary structure, monomer. Mg(2+) is required as a cofactor.

The protein localises to the cytoplasm. It carries out the reaction Mo-molybdopterin + GTP + H(+) = Mo-molybdopterin guanine dinucleotide + diphosphate. Functionally, transfers a GMP moiety from GTP to Mo-molybdopterin (Mo-MPT) cofactor (Moco or molybdenum cofactor) to form Mo-molybdopterin guanine dinucleotide (Mo-MGD) cofactor. This is Molybdenum cofactor guanylyltransferase from Serratia proteamaculans (strain 568).